A 250-amino-acid chain; its full sequence is Ubiquinone/menaquinone biosynthesis C-methyltransferase UbiE (250 aa).

Residues T73, D94, and 122 to 123 contribute to the S-adenosyl-L-methionine site; that span reads DA.

This sequence belongs to the class I-like SAM-binding methyltransferase superfamily. MenG/UbiE family.

It catalyses the reaction a 2-demethylmenaquinol + S-adenosyl-L-methionine = a menaquinol + S-adenosyl-L-homocysteine + H(+). The enzyme catalyses a 2-methoxy-6-(all-trans-polyprenyl)benzene-1,4-diol + S-adenosyl-L-methionine = a 5-methoxy-2-methyl-3-(all-trans-polyprenyl)benzene-1,4-diol + S-adenosyl-L-homocysteine + H(+). Its pathway is quinol/quinone metabolism; menaquinone biosynthesis; menaquinol from 1,4-dihydroxy-2-naphthoate: step 2/2. It participates in cofactor biosynthesis; ubiquinone biosynthesis. Functionally, methyltransferase required for the conversion of demethylmenaquinol (DMKH2) to menaquinol (MKH2) and the conversion of 2-polyprenyl-6-methoxy-1,4-benzoquinol (DDMQH2) to 2-polyprenyl-3-methyl-6-methoxy-1,4-benzoquinol (DMQH2). The chain is Ubiquinone/menaquinone biosynthesis C-methyltransferase UbiE from Coxiella burnetii (strain RSA 331 / Henzerling II).